We begin with the raw amino-acid sequence, 163 residues long: Ureidoglycolate lyase 2 (163 aa).

It belongs to the ureidoglycolate lyase family. Homodimer. The cofactor is Ni(2+).

It carries out the reaction (S)-ureidoglycolate = urea + glyoxylate. Its pathway is nitrogen metabolism; (S)-allantoin degradation. Catalyzes the catabolism of the allantoin degradation intermediate (S)-ureidoglycolate, generating urea and glyoxylate. Involved in the utilization of allantoin as nitrogen source. The sequence is that of Ureidoglycolate lyase 2 from Rhizobium meliloti (strain 1021) (Ensifer meliloti).